The sequence spans 339 residues: MVREEVAGSTQTLQWKCVESRVDSKRLYYGRFILSPLRKGQADTVGIALRRALLGEIEGTCITRAKFWSVPHEYSTIAGIEESVQEILLNLKEIVLRSNLYGVRDASICVKGPKYITAQDIILPPSVEIVDTAQPIANLTEPIDFCIDLQIKRDRGYQTELIKNYQDGSYPIDAVSMPVRNVNYSIFSCGNGNEKHEILFLEIWTNGSLTPKEALYEASRNLIDLFLPFLHAEEEGTSFEENKNRFTPPLFTFQKRLTNLKKNKKGIPLNCIFIDQLELTSRTXNCLKRANIHTLLDLLSKTEEDLLRIDSFRMEDRKHIWDTLEKHLPIDLLKNKLSF.

An alpha N-terminal domain (alpha-NTD) region spans residues 1-233 (MVREEVAGST…DLFLPFLHAE (233 aa)). Residues 264 to 339 (KKGIPLNCIF…IDLLKNKLSF (76 aa)) are alpha C-terminal domain (alpha-CTD).

Belongs to the RNA polymerase alpha chain family. In terms of assembly, in plastids the minimal PEP RNA polymerase catalytic core is composed of four subunits: alpha, beta, beta', and beta''. When a (nuclear-encoded) sigma factor is associated with the core the holoenzyme is formed, which can initiate transcription.

Its subcellular location is the plastid. It localises to the chloroplast. It catalyses the reaction RNA(n) + a ribonucleoside 5'-triphosphate = RNA(n+1) + diphosphate. Functionally, DNA-dependent RNA polymerase catalyzes the transcription of DNA into RNA using the four ribonucleoside triphosphates as substrates. This is DNA-directed RNA polymerase subunit alpha from Heteranthelium piliferum (Elymus pilifer).